The primary structure comprises 318 residues: Methionyl-tRNA formyltransferase (318 aa).

110–113 (SLLP) provides a ligand contact to (6S)-5,6,7,8-tetrahydrofolate.

The protein belongs to the Fmt family.

It catalyses the reaction L-methionyl-tRNA(fMet) + (6R)-10-formyltetrahydrofolate = N-formyl-L-methionyl-tRNA(fMet) + (6S)-5,6,7,8-tetrahydrofolate + H(+). Attaches a formyl group to the free amino group of methionyl-tRNA(fMet). The formyl group appears to play a dual role in the initiator identity of N-formylmethionyl-tRNA by promoting its recognition by IF2 and preventing the misappropriation of this tRNA by the elongation apparatus. The polypeptide is Methionyl-tRNA formyltransferase (Geobacillus sp. (strain WCH70)).